The following is a 513-amino-acid chain: GMP synthase [glutamine-hydrolyzing] (513 aa).

The 190-residue stretch at 9–198 (LILVLDFGSQ…VRRVCNCTGE (190 aa)) folds into the Glutamine amidotransferase type-1 domain. Cys-86 (nucleophile) is an active-site residue. Active-site residues include His-172 and Glu-174. Positions 199–388 (WTMENFIEIE…LGIPEHLVWR (190 aa)) constitute a GMPS ATP-PPase domain. An ATP-binding site is contributed by 226–232 (SGGVDSS).

As to quaternary structure, homodimer.

The catalysed reaction is XMP + L-glutamine + ATP + H2O = GMP + L-glutamate + AMP + diphosphate + 2 H(+). It functions in the pathway purine metabolism; GMP biosynthesis; GMP from XMP (L-Gln route): step 1/1. Functionally, catalyzes the synthesis of GMP from XMP. In Staphylococcus epidermidis (strain ATCC 35984 / DSM 28319 / BCRC 17069 / CCUG 31568 / BM 3577 / RP62A), this protein is GMP synthase [glutamine-hydrolyzing].